The primary structure comprises 478 residues: Phenylalanine--tRNA ligase alpha subunit (478 aa).

Residues threonine 318, 357–359, and tyrosine 397 each bind L-phenylalanine; that span reads QLE. A Mg(2+)-binding site is contributed by glutamate 399. Phenylalanine 422 is an L-phenylalanine binding site.

Belongs to the class-II aminoacyl-tRNA synthetase family. Phe-tRNA synthetase alpha subunit type 2 subfamily. Tetramer of two alpha and two beta subunits. Requires Mg(2+) as cofactor.

The protein resides in the cytoplasm. It carries out the reaction tRNA(Phe) + L-phenylalanine + ATP = L-phenylalanyl-tRNA(Phe) + AMP + diphosphate + H(+). The protein is Phenylalanine--tRNA ligase alpha subunit of Methanospirillum hungatei JF-1 (strain ATCC 27890 / DSM 864 / NBRC 100397 / JF-1).